The sequence spans 374 residues: UDP-N-acetylglucosamine--N-acetylmuramyl-(pentapeptide) pyrophosphoryl-undecaprenol N-acetylglucosamine transferase (374 aa).

Residues 13–15, Asn-124, Arg-165, Ser-193, and Gln-294 each bind UDP-N-acetyl-alpha-D-glucosamine; that span reads TGG.

It belongs to the glycosyltransferase 28 family. MurG subfamily.

It localises to the cell inner membrane. It carries out the reaction di-trans,octa-cis-undecaprenyl diphospho-N-acetyl-alpha-D-muramoyl-L-alanyl-D-glutamyl-meso-2,6-diaminopimeloyl-D-alanyl-D-alanine + UDP-N-acetyl-alpha-D-glucosamine = di-trans,octa-cis-undecaprenyl diphospho-[N-acetyl-alpha-D-glucosaminyl-(1-&gt;4)]-N-acetyl-alpha-D-muramoyl-L-alanyl-D-glutamyl-meso-2,6-diaminopimeloyl-D-alanyl-D-alanine + UDP + H(+). It functions in the pathway cell wall biogenesis; peptidoglycan biosynthesis. Cell wall formation. Catalyzes the transfer of a GlcNAc subunit on undecaprenyl-pyrophosphoryl-MurNAc-pentapeptide (lipid intermediate I) to form undecaprenyl-pyrophosphoryl-MurNAc-(pentapeptide)GlcNAc (lipid intermediate II). This is UDP-N-acetylglucosamine--N-acetylmuramyl-(pentapeptide) pyrophosphoryl-undecaprenol N-acetylglucosamine transferase from Rhizobium leguminosarum bv. trifolii (strain WSM2304).